A 303-amino-acid polypeptide reads, in one-letter code: tRNA pseudouridine synthase-like 1 (303 aa).

The active-site Nucleophile is the D66. At S84 the chain carries Phosphoserine. Residue Y130 participates in substrate binding.

This sequence belongs to the tRNA pseudouridine synthase TruA family.

It catalyses the reaction a uridine in tRNA = a pseudouridine in tRNA. This Homo sapiens (Human) protein is tRNA pseudouridine synthase-like 1 (PUSL1).